Consider the following 168-residue polypeptide: Luminal-binding protein 3 (168 aa).

N-linked (GlcNAc...) asparagine glycosylation is present at Asn-120. A disordered region spans residues 148–168 (QRSGGASGGSSSSEEDGHDEL). A Prevents secretion from ER motif is present at residues 165–168 (HDEL).

Belongs to the heat shock protein 70 family.

The protein localises to the endoplasmic reticulum lumen. Functionally, probably plays a role in facilitating the assembly of multimeric protein complexes inside the ER. The protein is Luminal-binding protein 3 (BIP3) of Nicotiana tabacum (Common tobacco).